Reading from the N-terminus, the 104-residue chain is L-rhamnose mutarotase (104 aa).

Position 18 (Y18) interacts with substrate. The Proton donor role is filled by H22. Residues Y41 and 76-77 (WW) each bind substrate.

It belongs to the rhamnose mutarotase family. Homodimer.

The protein resides in the cytoplasm. It catalyses the reaction alpha-L-rhamnose = beta-L-rhamnose. The protein operates within carbohydrate metabolism; L-rhamnose metabolism. Involved in the anomeric conversion of L-rhamnose. The polypeptide is L-rhamnose mutarotase (Oceanobacillus iheyensis (strain DSM 14371 / CIP 107618 / JCM 11309 / KCTC 3954 / HTE831)).